Here is a 235-residue protein sequence, read N- to C-terminus: Phosphoribosylaminoimidazole-succinocarboxamide synthase (235 aa).

The protein belongs to the SAICAR synthetase family.

It carries out the reaction 5-amino-1-(5-phospho-D-ribosyl)imidazole-4-carboxylate + L-aspartate + ATP = (2S)-2-[5-amino-1-(5-phospho-beta-D-ribosyl)imidazole-4-carboxamido]succinate + ADP + phosphate + 2 H(+). Its pathway is purine metabolism; IMP biosynthesis via de novo pathway; 5-amino-1-(5-phospho-D-ribosyl)imidazole-4-carboxamide from 5-amino-1-(5-phospho-D-ribosyl)imidazole-4-carboxylate: step 1/2. This Exiguobacterium sibiricum (strain DSM 17290 / CCUG 55495 / CIP 109462 / JCM 13490 / 255-15) protein is Phosphoribosylaminoimidazole-succinocarboxamide synthase.